We begin with the raw amino-acid sequence, 615 residues long: Lipoprotein LpqB (615 aa).

A signal peptide spans 1 to 29; sequence MGADRGRGGRRRPARVVAYAVGGVVLLAG. Cysteine 30 carries the N-palmitoyl cysteine lipid modification. Cysteine 30 carries the S-diacylglycerol cysteine lipid modification. A disordered region spans residues 100-123; that stretch reads PDESATVLAGGPGTESDHSGNRED. Positions 114–123 are enriched in basic and acidic residues; that stretch reads ESDHSGNRED.

The protein belongs to the LpqB lipoprotein family.

The protein resides in the cell membrane. The sequence is that of Lipoprotein LpqB from Streptomyces coelicolor (strain ATCC BAA-471 / A3(2) / M145).